Here is a 28-residue protein sequence, read N- to C-terminus: Humanin-like 2 (28 aa).

The protein belongs to the humanin family. Highly expressed in testis. Also expressed in kidney, heart, skeletal muscles and brain.

Its subcellular location is the secreted. It is found in the cytoplasm. Its function is as follows. Plays a role as a neuroprotective and antiapoptotic factor. The chain is Humanin-like 2 from Homo sapiens (Human).